Reading from the N-terminus, the 415-residue chain is MFS-type transporter FVEG_12626 (415 aa).

Over residues 1–18 (MDPDTEQMRVEKPNHEQP) the composition is skewed to basic and acidic residues. The segment at 1-22 (MDPDTEQMRVEKPNHEQPKPNT) is disordered. A run of 6 helical transmembrane segments spans residues 27–47 (GGFK…VGVF), 63–83 (TVSW…PFVG), 93–113 (YLLL…SISS), 118–138 (YILS…YPSF), 151–171 (LALG…PIVV), and 178–198 (IGFG…LLVT). A glycan (N-linked (GlcNAc...) asparagine) is linked at N199. Helical transmembrane passes span 227–247 (FILT…PITF), 264–284 (YLVS…GYIA), 290–310 (FNVS…LWLP), 318–338 (IAFA…SPAL), 354–374 (TMYA…GALI), and 386–406 (VFAG…RLYI).

Belongs to the major facilitator superfamily. Monocarboxylate porter (TC 2.A.1.13) family.

It localises to the membrane. MFS-type transporter; part of the Fusarium detoxification of benzoxazolinone cluster 2 (FDB2) involved in the degradation of benzoxazolinones produced by the host plant. Maize, wheat, and rye produce the 2 benzoxazinone phytoanticipins 2,4-dihy-droxy-7-methoxy-1,4-benzoxazin-3-one (DIMBOA) and 2,4-dihydroxy-1,4-benzoxazin-3-one (DIBOA) that, due to their inherent instability once released, spontaneously degrade to the more stable corresponding benzoxazolinones, 6-methoxy-2-benzoxazolinone (MBOA) and 2-benzoxazolinone (BOA), respectively. The polypeptide is MFS-type transporter FVEG_12626 (Gibberella moniliformis (strain M3125 / FGSC 7600) (Maize ear and stalk rot fungus)).